The following is a 292-amino-acid chain: Norajmaline N-methyltransferase (292 aa).

The tract at residues K71–V80 is SAM motif I. Positions K134–L142 are SAM motif II. A Vacuolar targeting signal motif is present at residues D135–V141. Positions I161 to I170 are SAM motif III.

This sequence belongs to the class I-like SAM-binding methyltransferase superfamily. gTMT family. In terms of assembly, homodimer. As to expression, mainly expressed in mature roots and, to a lesser extent, in leaves, stems and flowers.

It is found in the vacuole membrane. The catalysed reaction is norajmaline + S-adenosyl-L-methionine = ajmaline + S-adenosyl-L-homocysteine + H(+). The enzyme catalyses 4-methylnorajmaline + S-adenosyl-L-methionine = 4-methylajmaline + S-adenosyl-L-homocysteine + H(+). Its pathway is alkaloid biosynthesis; ajmaline biosynthesis. In terms of biological role, N-methyltransferase involved in the biosynthesis of ajmaline-type monoterpenoid indole alkaloids (MIAs) natural products, important plant-derived pharmaceuticals used in the therapy of heart disorders. Catalyzes the indole N-methylation of norajmaline to produce ajmaline. Also able, with a lower efficiency, to mediates the conversion of 4-methylnorajmaline to 4-methylajmaline. This is Norajmaline N-methyltransferase from Rauvolfia serpentina (Serpentine wood).